A 289-amino-acid chain; its full sequence is Golgi to ER traffic protein 2 (289 aa).

A compositionally biased stretch (basic and acidic residues) spans 1–10 (MSEVSEAEKR). Residues 1-68 (MSEVSEAEKR…LQRGSNSGQS (68 aa)) are disordered. Residues 1 to 153 (MSEVSEAEKR…VGVHQFQVRQ (153 aa)) are Cytoplasmic-facing. The segment covering 11–21 (RILREKRKQKF) has biased composition (basic residues). The segment covering 33 to 68 (ITTQQPGGASGDSTVTSAEISDNEGSLQRGSNSGQS) has biased composition (polar residues). The helical transmembrane segment at 154–173 (LKAYMLLLRWAILLPFIYYV) threads the bilayer. Residues 174 to 196 (MHPGTAHWLHTSRFLHFVMEPRN) lie on the Lumenal side of the membrane. Residues 197–216 (FFMVFTTFEVASISIYYQVL) traverse the membrane as a helical segment. The Cytoplasmic segment spans residues 217–263 (LTLERTNKVNSLSYSSKLVTWAGLVPDGMLPIDNLQGKVVVALHYWD). Residues 264–284 (ILSMYLTDLSLCLVAAGLMKY) form a helical membrane-spanning segment. The Lumenal segment spans residues 285-289 (YHAAP).

It belongs to the GET2 family. In terms of assembly, component of the Golgi to ER traffic (GET) complex, which is composed of GET1, GET2 and GET3. Within the complex, GET1 and GET2 form a heterotetramer which is stabilized by phosphatidylinositol binding and which binds to the GET3 homodimer.

It localises to the endoplasmic reticulum membrane. It is found in the golgi apparatus membrane. Its function is as follows. Required for the post-translational delivery of tail-anchored (TA) proteins to the endoplasmic reticulum. Together with GET1, acts as a membrane receptor for soluble GET3, which recognizes and selectively binds the transmembrane domain of TA proteins in the cytosol. The GET complex cooperates with the HDEL receptor ERD2 to mediate the ATP-dependent retrieval of resident ER proteins that contain a C-terminal H-D-E-L retention signal from the Golgi to the ER. This Eremothecium gossypii (strain ATCC 10895 / CBS 109.51 / FGSC 9923 / NRRL Y-1056) (Yeast) protein is Golgi to ER traffic protein 2.